The following is a 127-amino-acid chain: MSYRKLQRTSSQRRALLRDLTTSLIVNGKIETTEARAKEVRSTADKMISLAKKGDLSARRKAAAFMRDVVADVKEDGDNVAVQTALQKLFSDLGPQYADRNGGYTRIYKTMPRRGDGAQMVVLELVD.

It belongs to the bacterial ribosomal protein bL17 family. Part of the 50S ribosomal subunit. Contacts protein L32.

This Lactiplantibacillus plantarum (strain ATCC BAA-793 / NCIMB 8826 / WCFS1) (Lactobacillus plantarum) protein is Large ribosomal subunit protein bL17.